The chain runs to 256 residues: Pyridoxine 5'-phosphate synthase (256 aa).

Asn-10 serves as a coordination point for 3-amino-2-oxopropyl phosphate. 12-13 (DH) provides a ligand contact to 1-deoxy-D-xylulose 5-phosphate. Residue Arg-21 coordinates 3-amino-2-oxopropyl phosphate. Residue His-46 is the Proton acceptor of the active site. Residues Arg-48 and His-53 each coordinate 1-deoxy-D-xylulose 5-phosphate. Glu-73 serves as the catalytic Proton acceptor. Residue Thr-103 coordinates 1-deoxy-D-xylulose 5-phosphate. Residue His-193 is the Proton donor of the active site. Residues Gly-194 and 215-216 (GH) each bind 3-amino-2-oxopropyl phosphate.

Belongs to the PNP synthase family. Homooctamer; tetramer of dimers.

It is found in the cytoplasm. The catalysed reaction is 3-amino-2-oxopropyl phosphate + 1-deoxy-D-xylulose 5-phosphate = pyridoxine 5'-phosphate + phosphate + 2 H2O + H(+). The protein operates within cofactor biosynthesis; pyridoxine 5'-phosphate biosynthesis; pyridoxine 5'-phosphate from D-erythrose 4-phosphate: step 5/5. Functionally, catalyzes the complicated ring closure reaction between the two acyclic compounds 1-deoxy-D-xylulose-5-phosphate (DXP) and 3-amino-2-oxopropyl phosphate (1-amino-acetone-3-phosphate or AAP) to form pyridoxine 5'-phosphate (PNP) and inorganic phosphate. This is Pyridoxine 5'-phosphate synthase from Zymomonas mobilis subsp. mobilis (strain ATCC 31821 / ZM4 / CP4).